The primary structure comprises 306 residues: uncharacterized protein (306 aa).

This sequence to L.delbrueckii similar ORF in glnA 5'region.

This is an uncharacterized protein from Lactobacillus delbrueckii subsp. bulgaricus.